An 889-amino-acid polypeptide reads, in one-letter code: Alanine--tRNA ligase (889 aa).

Positions 569, 573, 671, and 675 each coordinate Zn(2+).

The protein belongs to the class-II aminoacyl-tRNA synthetase family. Zn(2+) is required as a cofactor.

Its subcellular location is the cytoplasm. The catalysed reaction is tRNA(Ala) + L-alanine + ATP = L-alanyl-tRNA(Ala) + AMP + diphosphate. Functionally, catalyzes the attachment of alanine to tRNA(Ala) in a two-step reaction: alanine is first activated by ATP to form Ala-AMP and then transferred to the acceptor end of tRNA(Ala). Also edits incorrectly charged Ser-tRNA(Ala) and Gly-tRNA(Ala) via its editing domain. The sequence is that of Alanine--tRNA ligase from Synechococcus sp. (strain CC9605).